Consider the following 318-residue polypeptide: Beta-ketoacyl-[acyl-carrier-protein] synthase III (318 aa).

Active-site residues include cysteine 113 and histidine 245. An ACP-binding region spans residues 246-250; the sequence is QANIR. Residue asparagine 275 is part of the active site.

This sequence belongs to the thiolase-like superfamily. FabH family. In terms of assembly, homodimer.

It is found in the cytoplasm. It catalyses the reaction malonyl-[ACP] + acetyl-CoA + H(+) = 3-oxobutanoyl-[ACP] + CO2 + CoA. It participates in lipid metabolism; fatty acid biosynthesis. Its function is as follows. Catalyzes the condensation reaction of fatty acid synthesis by the addition to an acyl acceptor of two carbons from malonyl-ACP. Catalyzes the first condensation reaction which initiates fatty acid synthesis and may therefore play a role in governing the total rate of fatty acid production. Possesses both acetoacetyl-ACP synthase and acetyl transacylase activities. Its substrate specificity determines the biosynthesis of branched-chain and/or straight-chain of fatty acids. This Wolbachia pipientis wMel protein is Beta-ketoacyl-[acyl-carrier-protein] synthase III.